The sequence spans 162 residues: CASP-like protein 1C1 (162 aa).

Over 1 to 7 (MFSAKAR) the chain is Cytoplasmic. Residues 8–28 (WIVAVVLRVAAAGAAAVAAVL) form a helical membrane-spanning segment. At 29–52 (MAMSHDEVIVYGMEVQAKFRYTPS) the chain is on the extracellular side. Residues 53 to 73 (LVFFVAANAAVSACSLVVLLV) traverse the membrane as a helical segment. The Cytoplasmic portion of the chain corresponds to 74–83 (PSSTSKLAAR). The helical transmembrane segment at 84–104 (LLLMADVVLGMVLAGAFAAAG) threads the bilayer. Residues 105–135 (AMAELGKNGNSHAGWIAICVQVPLFCDRVRS) are Extracellular-facing. The helical transmembrane segment at 136-156 (ALVAGSATIVLYYLMLMYSIY) threads the bilayer. Residues 157 to 162 (TLPMFP) lie on the Cytoplasmic side of the membrane.

This sequence belongs to the Casparian strip membrane proteins (CASP) family. As to quaternary structure, homodimer and heterodimers.

Its subcellular location is the cell membrane. This Oryza sativa subsp. japonica (Rice) protein is CASP-like protein 1C1.